The primary structure comprises 404 residues: Pyrophosphate--fructose 6-phosphate 1-phosphotransferase (404 aa).

Residue Gly12 participates in diphosphate binding. Asp121 contacts Mg(2+). Substrate-binding positions include 149–151 (TID), 194–196 (MGR), Glu266, and 323–326 (YFSR). The active-site Proton acceptor is Asp151.

Belongs to the phosphofructokinase type A (PFKA) family. PPi-dependent PFK group II subfamily. Clade 'P' sub-subfamily. As to quaternary structure, homodimer. Requires Mg(2+) as cofactor.

The protein localises to the cytoplasm. The catalysed reaction is beta-D-fructose 6-phosphate + diphosphate = beta-D-fructose 1,6-bisphosphate + phosphate + H(+). It functions in the pathway carbohydrate degradation; glycolysis; D-glyceraldehyde 3-phosphate and glycerone phosphate from D-glucose: step 3/4. Its activity is regulated as follows. Non-allosteric. Functionally, catalyzes the phosphorylation of D-fructose 6-phosphate, the first committing step of glycolysis. Uses inorganic phosphate (PPi) as phosphoryl donor instead of ATP like common ATP-dependent phosphofructokinases (ATP-PFKs), which renders the reaction reversible, and can thus function both in glycolysis and gluconeogenesis. Consistently, PPi-PFK can replace the enzymes of both the forward (ATP-PFK) and reverse (fructose-bisphosphatase (FBPase)) reactions. The sequence is that of Pyrophosphate--fructose 6-phosphate 1-phosphotransferase from Propionibacterium freudenreichii subsp. shermanii (strain ATCC 9614 / DSM 4902 / CIP 103027 / NCIMB 8099 / CIRM-BIA1).